The primary structure comprises 338 residues: Ketol-acid reductoisomerase (NADP(+)) (338 aa).

The 181-residue stretch at 1-181 (MKVYYDKDAD…GGTKGGVIET (181 aa)) folds into the KARI N-terminal Rossmann domain. Residues 24-27 (YGSQ), Arg47, and Ser52 each bind NADP(+). Residue His107 is part of the active site. NADP(+) is bound at residue Gly133. Positions 182-327 (NFREETETDL…SQLRAMMPWI (146 aa)) constitute a KARI C-terminal knotted domain. Mg(2+)-binding residues include Asp190, Glu194, Glu226, and Glu230. Ser251 contacts substrate.

It belongs to the ketol-acid reductoisomerase family. Mg(2+) is required as a cofactor.

The catalysed reaction is (2R)-2,3-dihydroxy-3-methylbutanoate + NADP(+) = (2S)-2-acetolactate + NADPH + H(+). It catalyses the reaction (2R,3R)-2,3-dihydroxy-3-methylpentanoate + NADP(+) = (S)-2-ethyl-2-hydroxy-3-oxobutanoate + NADPH + H(+). It functions in the pathway amino-acid biosynthesis; L-isoleucine biosynthesis; L-isoleucine from 2-oxobutanoate: step 2/4. It participates in amino-acid biosynthesis; L-valine biosynthesis; L-valine from pyruvate: step 2/4. Functionally, involved in the biosynthesis of branched-chain amino acids (BCAA). Catalyzes an alkyl-migration followed by a ketol-acid reduction of (S)-2-acetolactate (S2AL) to yield (R)-2,3-dihydroxy-isovalerate. In the isomerase reaction, S2AL is rearranged via a Mg-dependent methyl migration to produce 3-hydroxy-3-methyl-2-ketobutyrate (HMKB). In the reductase reaction, this 2-ketoacid undergoes a metal-dependent reduction by NADPH to yield (R)-2,3-dihydroxy-isovalerate. The protein is Ketol-acid reductoisomerase (NADP(+)) of Methylobacillus flagellatus (strain ATCC 51484 / DSM 6875 / VKM B-1610 / KT).